A 730-amino-acid polypeptide reads, in one-letter code: Probable G-protein coupled receptor 149 (730 aa).

The Extracellular portion of the chain corresponds to M1–S34. N-linked (GlcNAc...) asparagine glycans are attached at residues N7, N10, and N20. Residues L35 to V55 form a helical membrane-spanning segment. At S56–M68 the chain is on the cytoplasmic side. A helical membrane pass occupies residues L69–V89. Over L90–A108 the chain is Extracellular. The cysteines at positions 104 and 181 are disulfide-linked. The helical transmembrane segment at L109–Y131 threads the bilayer. Over T132–Q148 the chain is Cytoplasmic. The chain crosses the membrane as a helical span at residues V149 to C169. Residues G170–P188 are Extracellular-facing. The helical transmembrane segment at Y189–V209 threads the bilayer. At P210–R308 the chain is on the cytoplasmic side. The chain crosses the membrane as a helical span at residues F309–V329. Over V330–P340 the chain is Extracellular. Residues V341–L361 traverse the membrane as a helical segment. Over S362 to N730 the chain is Cytoplasmic.

The protein belongs to the G-protein coupled receptor 1 family. Expressed exclusively in brain and testis.

Its subcellular location is the cell membrane. Its function is as follows. Orphan receptor. This Rattus norvegicus (Rat) protein is Probable G-protein coupled receptor 149 (Gpr149).